The primary structure comprises 449 residues: Bifunctional protein GlmU (449 aa).

The interval 1-230 (MASSKLAVIV…EAELLGVNAR (230 aa)) is pyrophosphorylase. UDP-N-acetyl-alpha-D-glucosamine is bound by residues 11 to 14 (LAAG), Lys25, Gln74, 79 to 80 (GT), 102 to 104 (YGD), Gly142, Glu156, Asn171, and Asn228. Asp104 lines the Mg(2+) pocket. Asn228 serves as a coordination point for Mg(2+). The tract at residues 231–251 (SELAVAEALVQARLREAAMDN) is linker. Residues 252–449 (GATLIDPATV…QQAAKKAKKD (198 aa)) are N-acetyltransferase. UDP-N-acetyl-alpha-D-glucosamine is bound by residues Arg317 and Lys335. Catalysis depends on His347, which acts as the Proton acceptor. Tyr350 and Asn361 together coordinate UDP-N-acetyl-alpha-D-glucosamine. Acetyl-CoA is bound by residues Ala364, 370 to 371 (NY), Ser389, Ala407, and Arg424.

In the N-terminal section; belongs to the N-acetylglucosamine-1-phosphate uridyltransferase family. This sequence in the C-terminal section; belongs to the transferase hexapeptide repeat family. As to quaternary structure, homotrimer. It depends on Mg(2+) as a cofactor.

It is found in the cytoplasm. It carries out the reaction alpha-D-glucosamine 1-phosphate + acetyl-CoA = N-acetyl-alpha-D-glucosamine 1-phosphate + CoA + H(+). The catalysed reaction is N-acetyl-alpha-D-glucosamine 1-phosphate + UTP + H(+) = UDP-N-acetyl-alpha-D-glucosamine + diphosphate. It participates in nucleotide-sugar biosynthesis; UDP-N-acetyl-alpha-D-glucosamine biosynthesis; N-acetyl-alpha-D-glucosamine 1-phosphate from alpha-D-glucosamine 6-phosphate (route II): step 2/2. Its pathway is nucleotide-sugar biosynthesis; UDP-N-acetyl-alpha-D-glucosamine biosynthesis; UDP-N-acetyl-alpha-D-glucosamine from N-acetyl-alpha-D-glucosamine 1-phosphate: step 1/1. The protein operates within bacterial outer membrane biogenesis; LPS lipid A biosynthesis. Catalyzes the last two sequential reactions in the de novo biosynthetic pathway for UDP-N-acetylglucosamine (UDP-GlcNAc). The C-terminal domain catalyzes the transfer of acetyl group from acetyl coenzyme A to glucosamine-1-phosphate (GlcN-1-P) to produce N-acetylglucosamine-1-phosphate (GlcNAc-1-P), which is converted into UDP-GlcNAc by the transfer of uridine 5-monophosphate (from uridine 5-triphosphate), a reaction catalyzed by the N-terminal domain. The sequence is that of Bifunctional protein GlmU from Paramagnetospirillum magneticum (strain ATCC 700264 / AMB-1) (Magnetospirillum magneticum).